A 271-amino-acid polypeptide reads, in one-letter code: Shikimate kinase (271 aa).

83-93 (PIAMGLKSSSA) serves as a coordination point for ATP.

This sequence belongs to the GHMP kinase family. Archaeal shikimate kinase subfamily.

It localises to the cytoplasm. The catalysed reaction is shikimate + ATP = 3-phosphoshikimate + ADP + H(+). It functions in the pathway metabolic intermediate biosynthesis; chorismate biosynthesis; chorismate from D-erythrose 4-phosphate and phosphoenolpyruvate: step 5/7. This is Shikimate kinase from Thermococcus kodakarensis (strain ATCC BAA-918 / JCM 12380 / KOD1) (Pyrococcus kodakaraensis (strain KOD1)).